The sequence spans 367 residues: Glutamate 5-kinase (367 aa).

Lys10 is a binding site for ATP. The substrate site is built by Ser50, Asp137, and Asn149. ATP-binding positions include 169-170 (TD) and 211-217 (TGGMGTK). One can recognise a PUA domain in the interval 275–353 (AGEITVDEGA…QQIDAILGYE (79 aa)).

It belongs to the glutamate 5-kinase family.

It localises to the cytoplasm. It carries out the reaction L-glutamate + ATP = L-glutamyl 5-phosphate + ADP. The protein operates within amino-acid biosynthesis; L-proline biosynthesis; L-glutamate 5-semialdehyde from L-glutamate: step 1/2. Catalyzes the transfer of a phosphate group to glutamate to form L-glutamate 5-phosphate. The chain is Glutamate 5-kinase from Citrobacter koseri (strain ATCC BAA-895 / CDC 4225-83 / SGSC4696).